The primary structure comprises 353 residues: Photosystem II D2 protein (353 aa).

Threonine 2 is modified (N-acetylthreonine). At threonine 2 the chain carries Phosphothreonine. The helical transmembrane segment at 41-61 threads the bilayer; it reads CAYFAVGGWFTGTTFVTSWYT. A chlorophyll a-binding site is contributed by histidine 118. The helical transmembrane segment at 125–141 threads the bilayer; sequence GFMLRQFELARSVQLRP. Pheophytin a is bound by residues glutamine 130 and asparagine 143. The helical transmembrane segment at 153-166 threads the bilayer; sequence VFVSVFLIYPLGQS. Residue histidine 198 participates in chlorophyll a binding. Residues 208-228 traverse the membrane as a helical segment; sequence AALLCAIHGATVENTLFEDGD. A plastoquinone-binding residues include histidine 215 and phenylalanine 262. Fe cation is bound at residue histidine 215. Histidine 269 is a binding site for Fe cation. Residues 279-295 traverse the membrane as a helical segment; it reads GLWMSALGVVGLALNLR.

This sequence belongs to the reaction center PufL/M/PsbA/D family. As to quaternary structure, PSII is composed of 1 copy each of membrane proteins PsbA, PsbB, PsbC, PsbD, PsbE, PsbF, PsbH, PsbI, PsbJ, PsbK, PsbL, PsbM, PsbT, PsbX, PsbY, PsbZ, Psb30/Ycf12, at least 3 peripheral proteins of the oxygen-evolving complex and a large number of cofactors. It forms dimeric complexes. The D1/D2 heterodimer binds P680, chlorophylls that are the primary electron donor of PSII, and subsequent electron acceptors. It shares a non-heme iron and each subunit binds pheophytin, quinone, additional chlorophylls, carotenoids and lipids. There is also a Cl(-1) ion associated with D1 and D2, which is required for oxygen evolution. The PSII complex binds additional chlorophylls, carotenoids and specific lipids. serves as cofactor.

The protein resides in the plastid. The protein localises to the chloroplast thylakoid membrane. It carries out the reaction 2 a plastoquinone + 4 hnu + 2 H2O = 2 a plastoquinol + O2. In terms of biological role, photosystem II (PSII) is a light-driven water:plastoquinone oxidoreductase that uses light energy to abstract electrons from H(2)O, generating O(2) and a proton gradient subsequently used for ATP formation. It consists of a core antenna complex that captures photons, and an electron transfer chain that converts photonic excitation into a charge separation. The D1/D2 (PsbA/PsbD) reaction center heterodimer binds P680, the primary electron donor of PSII as well as several subsequent electron acceptors. D2 is needed for assembly of a stable PSII complex. This chain is Photosystem II D2 protein, found in Atropa belladonna (Belladonna).